The primary structure comprises 509 residues: tRNA-2-methylthio-N(6)-dimethylallyladenosine synthase (509 aa).

A compositionally biased stretch (polar residues) spans M1–S15. Residues M1–Y26 form a disordered region. Over residues T16–K25 the composition is skewed to basic and acidic residues. The 119-residue stretch at R66 to F184 folds into the MTTase N-terminal domain. C75, C111, C145, C221, C225, and C228 together coordinate [4Fe-4S] cluster. One can recognise a Radical SAM core domain in the interval R207 to E437. Positions N440–E503 constitute a TRAM domain.

This sequence belongs to the methylthiotransferase family. MiaB subfamily. In terms of assembly, monomer. [4Fe-4S] cluster serves as cofactor.

Its subcellular location is the cytoplasm. The enzyme catalyses N(6)-dimethylallyladenosine(37) in tRNA + (sulfur carrier)-SH + AH2 + 2 S-adenosyl-L-methionine = 2-methylsulfanyl-N(6)-dimethylallyladenosine(37) in tRNA + (sulfur carrier)-H + 5'-deoxyadenosine + L-methionine + A + S-adenosyl-L-homocysteine + 2 H(+). Functionally, catalyzes the methylthiolation of N6-(dimethylallyl)adenosine (i(6)A), leading to the formation of 2-methylthio-N6-(dimethylallyl)adenosine (ms(2)i(6)A) at position 37 in tRNAs that read codons beginning with uridine. This Bacillus cereus (strain AH187) protein is tRNA-2-methylthio-N(6)-dimethylallyladenosine synthase.